The sequence spans 151 residues: Small ribosomal subunit protein uS9 (151 aa).

The protein belongs to the universal ribosomal protein uS9 family.

The sequence is that of Small ribosomal subunit protein uS9 (RpS16) from Spodoptera frugiperda (Fall armyworm).